The following is a 261-amino-acid chain: Uridine-cytidine kinase 2 (261 aa).

A compositionally biased stretch (polar residues) spans 1-16 (MAGDSEQTLQNHQQPN). Residues 1 to 24 (MAGDSEQTLQNHQQPNGGEPFLIG) form a disordered region. A2 carries the N-acetylalanine modification. 27-35 (GGTASGKSS) provides a ligand contact to ATP. 6 residues coordinate substrate: D84, Y112, H117, R166, R176, and Q184. Residue D213 coordinates ATP. A disordered region spans residues 240–261 (GYLNGYTPSRKRQASESSSRPH). At S254 the chain carries Phosphoserine.

The protein belongs to the uridine kinase family. In terms of assembly, homotetramer.

It catalyses the reaction uridine + ATP = UMP + ADP + H(+). The catalysed reaction is cytidine + ATP = CMP + ADP + H(+). It participates in pyrimidine metabolism; CTP biosynthesis via salvage pathway; CTP from cytidine: step 1/3. The protein operates within pyrimidine metabolism; UMP biosynthesis via salvage pathway; UMP from uridine: step 1/1. In terms of biological role, phosphorylates uridine and cytidine to uridine monophosphate and cytidine monophosphate. Does not phosphorylate deoxyribonucleosides or purine ribonucleosides. Can use ATP or GTP as a phosphate donor. The polypeptide is Uridine-cytidine kinase 2 (Uck2) (Mus musculus (Mouse)).